Consider the following 1177-residue polypeptide: Zinc finger CCCH domain-containing protein 6 (1177 aa).

Basic and acidic residues predominate over residues 1–12; that stretch reads MTDSEHAGHDRE. 2 disordered regions span residues 1–137 and 179–206; these read MTDS…SKEY and QESS…TEYR. The span at 13–31 shows a compositional bias: acidic residues; that stretch reads DGELEDGEIDDAGFEETQD. A coiled-coil region spans residues 27-73; that stretch reads EETQDQEAKENEKQKNEKAYRKSRKKHKKEREKKKSKRRKHEKHKHN. The span at 32–46 shows a compositional bias: basic and acidic residues; the sequence is QEAKENEKQKNEKAY. Residues 47–73 show a composition bias toward basic residues; sequence RKSRKKHKKEREKKKSKRRKHEKHKHN. Residues 179-188 show a composition bias toward low complexity; it reads QESSGSSFSK. C3H1-type zinc fingers lie at residues 271–297, 299–326, and 327–350; these read KGKQ…HDAE, EKKK…HSEF, and PCKF…HDDL. Residues 347 to 383 are a coiled coil; the sequence is HDDLTKETRKLLDKVLNADEELVNEDERELEELRKRG. Disordered regions lie at residues 383–416, 446–587, 622–654, 670–767, 780–826, 942–988, 1043–1101, and 1132–1162; these read GITP…FETD, PPAF…ESMQ, QQQP…SASG, RYQE…KKPH, PKKL…SERE, EQSG…SSRS, DPRD…PVDG, and LLRP…DKPL. Low complexity predominate over residues 493–502; the sequence is HPGSPGHHPC. Polar residues-rich tracts occupy residues 512-522 and 564-587; these read ENPSLLPSSSE and SSPA…ESMQ. Over residues 713-728 the composition is skewed to polar residues; that stretch reads RTLQKQTGTLRNQQLP. The segment covering 753-767 has biased composition (basic and acidic residues); that stretch reads PRLRTVPRQDIKKPH. The segment covering 955 to 967 has biased composition (basic and acidic residues); sequence GDPRLQKNFDPRL. 2 stretches are compositionally biased toward polar residues: residues 1050 to 1064 and 1077 to 1093; these read LSAT…GENT and KNQP…NTTA. At Ser-1150 the chain carries Phosphoserine.

The sequence is that of Zinc finger CCCH domain-containing protein 6 (Zc3h6) from Mus musculus (Mouse).